The chain runs to 262 residues: L-aspartate dehydrogenase (262 aa).

Positions 128 and 183 each coordinate NAD(+). The active site involves histidine 213.

Belongs to the L-aspartate dehydrogenase family.

It catalyses the reaction L-aspartate + NADP(+) + H2O = oxaloacetate + NH4(+) + NADPH + H(+). It carries out the reaction L-aspartate + NAD(+) + H2O = oxaloacetate + NH4(+) + NADH + H(+). Its pathway is cofactor biosynthesis; NAD(+) biosynthesis; iminoaspartate from L-aspartate (dehydrogenase route): step 1/1. Its function is as follows. Specifically catalyzes the NAD or NADP-dependent dehydrogenation of L-aspartate to iminoaspartate. This chain is L-aspartate dehydrogenase, found in Methanopyrus kandleri (strain AV19 / DSM 6324 / JCM 9639 / NBRC 100938).